The chain runs to 244 residues: Extracellular superoxide dismutase [Cu-Zn] (244 aa).

An N-terminal signal peptide occupies residues 1–18 (MLALVCSCLLLAALPADT). Disulfide bonds link C67–C212 and C129–C211. Residue N111 is glycosylated (N-linked (GlcNAc...) asparagine). H118, H120, and H135 together coordinate Cu cation. Zn(2+) is bound by residues H135, H143, H146, and D149. A Cu cation-binding site is contributed by H185. Residues 221-244 (PWARQAQEHAERKKRRRESECKAA) are disordered. The span at 226-244 (AQEHAERKKRRRESECKAA) shows a compositional bias: basic and acidic residues.

The protein belongs to the Cu-Zn superoxide dismutase family. In terms of assembly, homotetramer. Directly interacts with ATP7A; this interaction is copper-dependent and is required for SOD3 activity. The cofactor is Cu cation. Zn(2+) serves as cofactor.

The protein localises to the secreted. It is found in the extracellular space. It localises to the golgi apparatus. The protein resides in the trans-Golgi network. It carries out the reaction 2 superoxide + 2 H(+) = H2O2 + O2. In terms of biological role, protect the extracellular space from toxic effect of reactive oxygen intermediates by converting superoxide radicals into hydrogen peroxide and oxygen. This is Extracellular superoxide dismutase [Cu-Zn] (SOD3) from Oryctolagus cuniculus (Rabbit).